The primary structure comprises 601 residues: Phosphomethylpyrimidine synthase (601 aa).

Disordered stretches follow at residues 1–31 (MTNKDARTPASSQTGEALASPQGDQEAGKSI) and 100–141 (AGRP…RDGQ). Over residues 100 to 112 (AGRPVRPEDDGIK) the composition is skewed to basic and acidic residues. Residues Asn-208, Met-237, Tyr-266, His-302, 322–324 (SRG), 363–366 (DGLR), and Glu-402 contribute to the substrate site. Zn(2+) is bound at residue His-406. Residue Tyr-429 coordinates substrate. Zn(2+) is bound at residue His-470. The [4Fe-4S] cluster site is built by Cys-550, Cys-553, and Cys-558.

This sequence belongs to the ThiC family. It depends on [4Fe-4S] cluster as a cofactor.

It carries out the reaction 5-amino-1-(5-phospho-beta-D-ribosyl)imidazole + S-adenosyl-L-methionine = 4-amino-2-methyl-5-(phosphooxymethyl)pyrimidine + CO + 5'-deoxyadenosine + formate + L-methionine + 3 H(+). The protein operates within cofactor biosynthesis; thiamine diphosphate biosynthesis. Catalyzes the synthesis of the hydroxymethylpyrimidine phosphate (HMP-P) moiety of thiamine from aminoimidazole ribotide (AIR) in a radical S-adenosyl-L-methionine (SAM)-dependent reaction. The sequence is that of Phosphomethylpyrimidine synthase from Streptomyces avermitilis (strain ATCC 31267 / DSM 46492 / JCM 5070 / NBRC 14893 / NCIMB 12804 / NRRL 8165 / MA-4680).